We begin with the raw amino-acid sequence, 710 residues long: Bifunctional sesterterpene synthase (710 aa).

Residues M1–E327 are stellata-2,6,19-trien synthase. Mg(2+) is bound by residues D92 and D96. Substrate contacts are provided by residues D92, D96, R181–D184, and S229–E233. The short motif at D92–D96 is the DDXXD motif 1 element. Positions Y278–K286 match the NSE motif motif. R318–Y319 serves as a coordination point for substrate. Residues R328–N709 are geranylgeranyl diphosphate synthase. The tract at residues H365–G404 is disordered. The span at V368–T380 shows a compositional bias: polar residues. The isopentenyl diphosphate site is built by K430, R433, and H462. Residues D469 and D473 each contribute to the Mg(2+) site. Residues D469 to D473 carry the DDXXD motif 2 motif. Residue R478 coordinates dimethylallyl diphosphate. R479 contributes to the isopentenyl diphosphate binding site. Residues K556, T557, Q592, N599, K609, and K619 each contribute to the dimethylallyl diphosphate site.

This sequence in the C-terminal section; belongs to the FPP/GGPP synthase family. The protein in the N-terminal section; belongs to the terpene synthase family. Hexamer.

The enzyme catalyses 4 isopentenyl diphosphate + dimethylallyl diphosphate = (2E,6E,10E,14E)-geranylfarnesyl diphosphate + 4 diphosphate. The catalysed reaction is (2E,6E,10E,14E)-geranylfarnesyl diphosphate = variecoladiene + diphosphate. It functions in the pathway secondary metabolite biosynthesis; terpenoid biosynthesis. Functionally, multifunctional sesterterpene synthase; part of the gene cluster that mediates the biosynthesis of the sesterterpene variecolin. The first step in the pathway is performed by the variecoladiene synthase vrcA that possesses both prenyl transferase and terpene cyclase activity, converting isopentenyl diphosphate and dimethylallyl diphosphate into geranylfarnesyl pyrophosphate (GFPP) and then converting GFPP into the tetracyclic variecoladiene. The cytochrome P450 monooxygenase vrcB then catalyzes multiple oxidations at C-5 and C-20 positions to yield variecolin. This chain is Bifunctional sesterterpene synthase, found in Aspergillus aculeatus (strain ATCC 16872 / CBS 172.66 / WB 5094).